Consider the following 442-residue polypeptide: tRNA-2-methylthio-N(6)-dimethylallyladenosine synthase (442 aa).

The 118-residue stretch at 5-122 folds into the MTTase N-terminal domain; the sequence is KKVFIKTLGC…LPEMIKQKQK (118 aa). 6 residues coordinate [4Fe-4S] cluster: cysteine 14, cysteine 51, cysteine 85, cysteine 159, cysteine 163, and cysteine 166. The region spanning 145–378 is the Radical SAM core domain; that stretch reads KAEGAKAYVS…DLLNSNAQII (234 aa). The region spanning 380–442 is the TRAM domain; it reads RQMVGTNQRI…LPNSLRGELI (63 aa).

Belongs to the methylthiotransferase family. MiaB subfamily. In terms of assembly, monomer. The cofactor is [4Fe-4S] cluster.

The protein localises to the cytoplasm. The catalysed reaction is N(6)-dimethylallyladenosine(37) in tRNA + (sulfur carrier)-SH + AH2 + 2 S-adenosyl-L-methionine = 2-methylsulfanyl-N(6)-dimethylallyladenosine(37) in tRNA + (sulfur carrier)-H + 5'-deoxyadenosine + L-methionine + A + S-adenosyl-L-homocysteine + 2 H(+). In terms of biological role, catalyzes the methylthiolation of N6-(dimethylallyl)adenosine (i(6)A), leading to the formation of 2-methylthio-N6-(dimethylallyl)adenosine (ms(2)i(6)A) at position 37 in tRNAs that read codons beginning with uridine. The chain is tRNA-2-methylthio-N(6)-dimethylallyladenosine synthase from Francisella tularensis subsp. holarctica (strain LVS).